Consider the following 516-residue polypeptide: Na(+)/H(+) antiporter NhaB (516 aa).

12 helical membrane-spanning segments follow: residues 23–43 (LALI…PFVA), 61–80 (CYPL…IGMT), 97–117 (LLLM…LFVF), 120–140 (LLLG…AAAF), 144–164 (FLDA…FYGI), 202–222 (LMMH…VGEP), 238–258 (FFLR…LTCL), 303–323 (ALIG…VGLI), 348–368 (TEAL…AVII), 391–411 (LFYL…VGTV), 447–467 (ATPN…APLI), and 475–495 (VWMA…CVEF).

Belongs to the NhaB Na(+)/H(+) (TC 2.A.34) antiporter family.

Its subcellular location is the cell inner membrane. It carries out the reaction 2 Na(+)(in) + 3 H(+)(out) = 2 Na(+)(out) + 3 H(+)(in). Its function is as follows. Na(+)/H(+) antiporter that extrudes sodium in exchange for external protons. The polypeptide is Na(+)/H(+) antiporter NhaB (Klebsiella pneumoniae subsp. pneumoniae (strain ATCC 700721 / MGH 78578)).